The sequence spans 182 residues: Small ribosomal subunit protein uS4c (182 aa).

The 62-residue stretch at 82-143 (MRLDNILFRL…KERSKVLIQN (62 aa)) folds into the S4 RNA-binding domain.

The protein belongs to the universal ribosomal protein uS4 family. In terms of assembly, part of the 30S ribosomal subunit. Contacts protein S5. The interaction surface between S4 and S5 is involved in control of translational fidelity.

It localises to the plastid. It is found in the chloroplast. Functionally, one of the primary rRNA binding proteins, it binds directly to 16S rRNA where it nucleates assembly of the body of the 30S subunit. With S5 and S12 plays an important role in translational accuracy. This Tigridia sp. (strain Lejeune 1997) protein is Small ribosomal subunit protein uS4c (rps4).